Reading from the N-terminus, the 76-residue chain is UPF0270 protein PSPA7_1664 (76 aa).

Belongs to the UPF0270 family.

The sequence is that of UPF0270 protein PSPA7_1664 from Pseudomonas paraeruginosa (strain DSM 24068 / PA7) (Pseudomonas aeruginosa (strain PA7)).